We begin with the raw amino-acid sequence, 334 residues long: Guanine nucleotide-binding protein subunit beta-like protein (334 aa).

WD repeat units follow at residues 14–55 (GHKD…DSEF), 65–104 (GHSK…SILL), 106–145 (GHGR…VLKM), 152–192 (MHRG…HLQT), 215–256 (DESK…QSFD), and 257–294 (AIVP…VIAS).

The protein belongs to the WD repeat G protein beta family.

The sequence is that of Guanine nucleotide-binding protein subunit beta-like protein from Encephalitozoon cuniculi (strain GB-M1) (Microsporidian parasite).